A 317-amino-acid chain; its full sequence is E3 ubiquitin-protein ligase NRDP1 (317 aa).

An RING-type; degenerate zinc finger spans residues 18–57 (CPICSGVLEEPVQAPHCEHAFCNACITQWFSQQQTCPVDR). An SIAH-type; degenerate zinc finger spans residues 78 to 138 (KLQIACDNAV…LPNHNCIKHL (61 aa)).

Interacts with USP8, ERBB3, PRKN and BIRC6. Interacts with CSF2RB, EPOR, IL3RA, MYD88 and TBK1. Interacts with CLEC16A. Post-translationally, autoubiquitinated. Autoubiquitination leads to proteasomal degradation. Deubiquitinated by USP8 to get stabilized which induces apoptosis. Detected in ovary, testis and prostate.

It catalyses the reaction S-ubiquitinyl-[E2 ubiquitin-conjugating enzyme]-L-cysteine + [acceptor protein]-L-lysine = [E2 ubiquitin-conjugating enzyme]-L-cysteine + N(6)-ubiquitinyl-[acceptor protein]-L-lysine.. The protein operates within protein modification; protein ubiquitination. Its function is as follows. Acts as E3 ubiquitin-protein ligase and regulates the degradation of target proteins. Polyubiquitinates MYD88. Negatively regulates MYD88-dependent production of pro-inflammatory cytokines. Can promote TRIF-dependent production of type I interferon and inhibits infection with vesicular stomatitis virus. Promotes also activation of TBK1 and IRF3. Involved in the ubiquitination of erythropoietin (EPO) and interleukin-3 (IL-3) receptors. Thus, through maintaining basal levels of cytokine receptors, RNF41 is involved in the control of hematopoietic progenitor cell differentiation into myeloerythroid lineages. Contributes to the maintenance of steady-state ERBB3 levels by mediating its growth factor-independent degradation. Involved in the degradation of the inhibitor of apoptosis BIRC6 and thus is an important regulator of cell death by promoting apoptosis. Also acts as a PRKN modifier that accelerates its degradation, resulting in a reduction of PRKN activity, influencing the balance of intracellular redox state. The RNF41-PRKN pathway regulates autophagosome-lysosome fusion during late mitophagy. Mitophagy is a selective form of autophagy necessary for mitochondrial quality control. This is E3 ubiquitin-protein ligase NRDP1 (RNF41) from Homo sapiens (Human).